Consider the following 88-residue polypeptide: Small ribosomal subunit protein bS20 (88 aa).

This sequence belongs to the bacterial ribosomal protein bS20 family.

In terms of biological role, binds directly to 16S ribosomal RNA. The chain is Small ribosomal subunit protein bS20 from Brucella abortus (strain S19).